The sequence spans 199 residues: Recombination protein RecR (199 aa).

The segment at 57-72 (CEICGNLDTKSICHIC) adopts a C4-type zinc-finger fold. The region spanning 80–175 (STIAIVETVA…KISRLASGIP (96 aa)) is the Toprim domain.

Belongs to the RecR family.

In terms of biological role, may play a role in DNA repair. It seems to be involved in an RecBC-independent recombinational process of DNA repair. It may act with RecF and RecO. The chain is Recombination protein RecR from Rickettsia prowazekii (strain Madrid E).